Consider the following 1210-residue polypeptide: Inner capsid protein VP3 (1210 aa).

Residues 1–28 are disordered; that stretch reads MPRTSRNVRATEVATTAIPPSNAATDTT. The C2H2-type zinc finger occupies 113-136; it reads LRCQQCGAKFSSMTQLAEHVRTEH. A disordered region spans residues 294–319; the sequence is PHAGPQVRSVQSQDQQVYSVDSGPDP. The segment covering 299 to 315 has biased composition (low complexity); that stretch reads QVRSVQSQDQQVYSVDS.

The protein belongs to the turreted BTV-fold inner capsid family. As to quaternary structure, homodecamer; each decamer is made up of two conformers of VP2, called VP2A and VP2B. 12 homodecamers assemble to form an icosahedral capsid. Interacts with VP6.

The protein localises to the virion. Functionally, inner capsid protein that self-assembles to form an icosahedral capsid with a T=2 symmetry, which consists of 120 copies of VP2, with channels at each of its five-fold vertices. This capsid constitutes the innermost concentric layer of the viral mature particle. The sequence is that of Inner capsid protein VP3 (S3) from Aquareovirus A (isolate Chum salmon/Japan/CSRV/1981) (AQRV-A).